A 209-amino-acid polypeptide reads, in one-letter code: Large ribosomal subunit protein uL4 (209 aa).

The disordered stretch occupies residues 45–77; it reads RQGTHKAKERAEVTGSTRKIKKQKGTGTARAGS.

This sequence belongs to the universal ribosomal protein uL4 family. In terms of assembly, part of the 50S ribosomal subunit.

Functionally, one of the primary rRNA binding proteins, this protein initially binds near the 5'-end of the 23S rRNA. It is important during the early stages of 50S assembly. It makes multiple contacts with different domains of the 23S rRNA in the assembled 50S subunit and ribosome. In terms of biological role, forms part of the polypeptide exit tunnel. The protein is Large ribosomal subunit protein uL4 of Flavobacterium johnsoniae (strain ATCC 17061 / DSM 2064 / JCM 8514 / BCRC 14874 / CCUG 350202 / NBRC 14942 / NCIMB 11054 / UW101) (Cytophaga johnsonae).